The sequence spans 358 residues: Isopentenyl-diphosphate delta-isomerase (358 aa).

12–13 lines the substrate pocket; it reads RK. FMN contacts are provided by residues 69–71, Ser99, and Asn128; that span reads AMT. Gln158 serves as a coordination point for substrate. Glu159 is a binding site for Mg(2+). FMN-binding positions include Lys190, Thr220, 267–269, and 288–289; these read GIR and AG.

Belongs to the IPP isomerase type 2 family. Homooctamer. Dimer of tetramers. FMN serves as cofactor. NADPH is required as a cofactor. The cofactor is Mg(2+).

It localises to the cytoplasm. It carries out the reaction isopentenyl diphosphate = dimethylallyl diphosphate. Involved in the biosynthesis of isoprenoids. Catalyzes the 1,3-allylic rearrangement of the homoallylic substrate isopentenyl (IPP) to its allylic isomer, dimethylallyl diphosphate (DMAPP). This chain is Isopentenyl-diphosphate delta-isomerase, found in Listeria innocua serovar 6a (strain ATCC BAA-680 / CLIP 11262).